A 422-amino-acid polypeptide reads, in one-letter code: Probable tRNA pseudouridine synthase D 2 (422 aa).

Asp89 serves as the catalytic Nucleophile. In terms of domain architecture, TRUD spans 160 to 371 (GAPNYFDSQR…IYSERKILSI (212 aa)).

It belongs to the pseudouridine synthase TruD family.

It catalyses the reaction uridine(13) in tRNA = pseudouridine(13) in tRNA. Its function is as follows. Could be responsible for synthesis of pseudouridine from uracil-13 in transfer RNAs. This Methanocaldococcus jannaschii (strain ATCC 43067 / DSM 2661 / JAL-1 / JCM 10045 / NBRC 100440) (Methanococcus jannaschii) protein is Probable tRNA pseudouridine synthase D 2.